Reading from the N-terminus, the 426-residue chain is Histidine--tRNA ligase (426 aa).

Belongs to the class-II aminoacyl-tRNA synthetase family. As to quaternary structure, homodimer.

The protein resides in the cytoplasm. The catalysed reaction is tRNA(His) + L-histidine + ATP = L-histidyl-tRNA(His) + AMP + diphosphate + H(+). In Streptococcus pyogenes serotype M5 (strain Manfredo), this protein is Histidine--tRNA ligase.